Consider the following 403-residue polypeptide: Histidine--tRNA ligase (403 aa).

It belongs to the class-II aminoacyl-tRNA synthetase family. As to quaternary structure, homodimer.

The protein resides in the cytoplasm. The enzyme catalyses tRNA(His) + L-histidine + ATP = L-histidyl-tRNA(His) + AMP + diphosphate + H(+). The polypeptide is Histidine--tRNA ligase (hisS) (Aquifex aeolicus (strain VF5)).